The primary structure comprises 295 residues: Protease HtpX (295 aa).

Transmembrane regions (helical) follow at residues 4–24 (IVLF…ILSL) and 34–54 (GLMI…LLMS). Residue His-139 coordinates Zn(2+). Glu-140 is a catalytic residue. His-143 provides a ligand contact to Zn(2+). 2 helical membrane-spanning segments follow: residues 147–167 (GDMV…IFIS) and 194–214 (IVYM…ASII). Zn(2+) is bound at residue Glu-223.

Belongs to the peptidase M48B family. Requires Zn(2+) as cofactor.

The protein resides in the cell inner membrane. The chain is Protease HtpX from Photorhabdus laumondii subsp. laumondii (strain DSM 15139 / CIP 105565 / TT01) (Photorhabdus luminescens subsp. laumondii).